The following is a 182-amino-acid chain: uncharacterized protein (182 aa).

Residues 1–26 (MIRALCTIVLIAAGVAVALYLSLVYG) form the signal peptide. The disordered stretch occupies residues 68–90 (YTERPYPVSSTQSPTTTQSPTTT). A compositionally biased stretch (low complexity) spans 74–90 (PVSSTQSPTTTQSPTTT).

This is an uncharacterized protein from Dryophytes versicolor (chameleon treefrog).